Here is a 325-residue protein sequence, read N- to C-terminus: RNA ligase 1 (325 aa).

Mg(2+) is required as a cofactor. Mn(2+) serves as cofactor. Post-translationally, AMPylates itself (auto-AMPylation).

The enzyme catalyses ATP + (ribonucleotide)n-3'-hydroxyl + 5'-phospho-(ribonucleotide)m = (ribonucleotide)n+m + AMP + diphosphate.. Functionally, functions as an RNA ligase, in vitro. The ligation reaction entails three nucleotidyl transfer steps. In the first step, the RNA ligase reacts with ATP in the absence of nucleic acid to form a covalent ligase-AMP intermediate and release pyrophosphate. In step 2, the ligase-AMP binds to the nucleic acid and transfers the adenylate to the 5'-PO4 terminus to form an adenylylated intermediate. In step 3, the RNA ligase directs the attack of the 3'-OH on the 5'-phosphoanhydride linkage, resulting in a repaired 3'-5' phosphodiester and release of AMP. Exhibits selectivity for single-stranded RNA substrates and may not have nick-sealing activity on double-stranded DNA-RNA hybrids. May play a role in maintaining RNA integrity under stress conditions, for example in response to reactive oxygen species (ROS). The polypeptide is RNA ligase 1 (Rattus norvegicus (Rat)).